The sequence spans 188 residues: Probable nicotinate-nucleotide adenylyltransferase (188 aa).

The protein belongs to the NadD family.

The enzyme catalyses nicotinate beta-D-ribonucleotide + ATP + H(+) = deamido-NAD(+) + diphosphate. The protein operates within cofactor biosynthesis; NAD(+) biosynthesis; deamido-NAD(+) from nicotinate D-ribonucleotide: step 1/1. Catalyzes the reversible adenylation of nicotinate mononucleotide (NaMN) to nicotinic acid adenine dinucleotide (NaAD). The chain is Probable nicotinate-nucleotide adenylyltransferase from Solibacter usitatus (strain Ellin6076).